We begin with the raw amino-acid sequence, 250 residues long: UPF0014 membrane protein YjkA (250 aa).

A run of 6 helical transmembrane segments spans residues 3 to 23 (YLSL…SKSF), 32 to 52 (IIAT…LSLI), 57 to 77 (HPVF…QNVI), 91 to 111 (FAAL…LHII), 117 to 137 (YVIP…SLFL), and 214 to 234 (LLIV…LSVL).

It belongs to the UPF0014 family.

The protein resides in the cell membrane. In Bacillus subtilis (strain 168), this protein is UPF0014 membrane protein YjkA (yjkA).